A 380-amino-acid polypeptide reads, in one-letter code: Succinyl-diaminopimelate desuccinylase (380 aa).

H68 is a binding site for Zn(2+). Residue D70 is part of the active site. D101 is a Zn(2+) binding site. The active-site Proton acceptor is E135. The Zn(2+) site is built by E136, E164, and H350.

This sequence belongs to the peptidase M20A family. DapE subfamily. In terms of assembly, homodimer. Zn(2+) serves as cofactor. It depends on Co(2+) as a cofactor.

The enzyme catalyses N-succinyl-(2S,6S)-2,6-diaminopimelate + H2O = (2S,6S)-2,6-diaminopimelate + succinate. It functions in the pathway amino-acid biosynthesis; L-lysine biosynthesis via DAP pathway; LL-2,6-diaminopimelate from (S)-tetrahydrodipicolinate (succinylase route): step 3/3. Its function is as follows. Catalyzes the hydrolysis of N-succinyl-L,L-diaminopimelic acid (SDAP), forming succinate and LL-2,6-diaminopimelate (DAP), an intermediate involved in the bacterial biosynthesis of lysine and meso-diaminopimelic acid, an essential component of bacterial cell walls. This Tolumonas auensis (strain DSM 9187 / NBRC 110442 / TA 4) protein is Succinyl-diaminopimelate desuccinylase.